The sequence spans 162 residues: UPF0254 protein MTH1148 homolog (162 aa).

It belongs to the UPF0254 family.

The sequence is that of UPF0254 protein MTH1148 homolog from Methanothermobacter thermautotrophicus (strain Winter) (Methanobacterium thermoautotrophicum).